Consider the following 449-residue polypeptide: Phosphoribosylamine--glycine ligase (449 aa).

Residues 112–325 (RELMEKYDIP…IVTLHASIAE (214 aa)) enclose the ATP-grasp domain. 139 to 202 (IDELGKPVAV…EEKCVGEEYT (64 aa)) contacts ATP. Mg(2+) contacts are provided by Gln283, Glu295, and Asn297. Gln283, Glu295, and Asn297 together coordinate Mn(2+).

The protein belongs to the GARS family. The cofactor is Mg(2+). Requires Mn(2+) as cofactor.

It catalyses the reaction 5-phospho-beta-D-ribosylamine + glycine + ATP = N(1)-(5-phospho-beta-D-ribosyl)glycinamide + ADP + phosphate + H(+). It functions in the pathway purine metabolism; IMP biosynthesis via de novo pathway; N(1)-(5-phospho-D-ribosyl)glycinamide from 5-phospho-alpha-D-ribose 1-diphosphate: step 2/2. The polypeptide is Phosphoribosylamine--glycine ligase (Methanopyrus kandleri (strain AV19 / DSM 6324 / JCM 9639 / NBRC 100938)).